Consider the following 368-residue polypeptide: Histidinol-phosphate aminotransferase (368 aa).

Position 224 is an N6-(pyridoxal phosphate)lysine (lysine 224).

It belongs to the class-II pyridoxal-phosphate-dependent aminotransferase family. Histidinol-phosphate aminotransferase subfamily. As to quaternary structure, homodimer. Pyridoxal 5'-phosphate is required as a cofactor.

The enzyme catalyses L-histidinol phosphate + 2-oxoglutarate = 3-(imidazol-4-yl)-2-oxopropyl phosphate + L-glutamate. Its pathway is amino-acid biosynthesis; L-histidine biosynthesis; L-histidine from 5-phospho-alpha-D-ribose 1-diphosphate: step 7/9. The protein is Histidinol-phosphate aminotransferase of Agrobacterium fabrum (strain C58 / ATCC 33970) (Agrobacterium tumefaciens (strain C58)).